Consider the following 467-residue polypeptide: Actinorhodin polyketide putative beta-ketoacyl synthase 1 (467 aa).

The tract at residues 1–35 (MPLDAAPVDPASRGPVSAFEPPSSHGADDDDDHRT) is disordered. A Ketosynthase family 3 (KS3) domain is found at 45–459 (KRRVVITGVG…GFQSAMVLRD (415 aa)). Residues C212, H352, and H389 each act as for beta-ketoacyl synthase activity in the active site.

It belongs to the thiolase-like superfamily. Beta-ketoacyl-ACP synthases family.

Its pathway is antibiotic biosynthesis; actinorhodin biosynthesis. The sequence is that of Actinorhodin polyketide putative beta-ketoacyl synthase 1 from Streptomyces coelicolor (strain ATCC BAA-471 / A3(2) / M145).